The sequence spans 179 residues: Macro domain-containing protein XAC3343 (179 aa).

The 175-residue stretch at 1 to 175 folds into the Macro domain; the sequence is MRIEVWQGDI…AYQQALATQE (175 aa).

It belongs to the MacroD-type family.

The sequence is that of Macro domain-containing protein XAC3343 from Xanthomonas axonopodis pv. citri (strain 306).